We begin with the raw amino-acid sequence, 199 residues long: Prolactin (199 aa).

Cys4 and Cys11 are joined by a disulfide. Ser26 is subject to Phosphoserine. A glycan (N-linked (GlcNAc...) asparagine; partial) is linked at Asn31. Residues Ser34 and Ser90 each carry the phosphoserine modification. Intrachain disulfides connect Cys58–Cys174 and Cys191–Cys199.

It belongs to the somatotropin/prolactin family. As to quaternary structure, interacts with PRLR.

The protein localises to the secreted. Prolactin acts primarily on the mammary gland by promoting lactation. This is Prolactin (PRL) from Camelus dromedarius (Dromedary).